A 339-amino-acid chain; its full sequence is MESNDLNKESLENWNESWDLVMTFGMGHLTSKLFNILMNNSIFDMINESPKHYKEIAKIINFNEFSCYRLLRYFVPYGLFEENNEIFSITNKSKKLIKSGGIYNLCTFFSSNDYFKLYSTIPESFEQNKNLGPSSFGFDDFWDIVKTNEHFKYSFNQEMREFSNLSIPTIIKNTDFSSFNTVVDVGGSHGRIVGELVKKYENLNGIVFDLETVINSSIEKIKHPRIEYVSGSFFESVPSADCYVLKNILHDWDDEKCLEILKTISKSMKENSKIFIFDEIIDPNDYRKLSLFLDVTVFHFFNSRERSLNDWKQLCDKSDFKIDSINNVTQPQLLILSKK.

S-adenosyl-L-methionine-binding residues include G186, D209, S232, F233, and K246. H250 functions as the Proton acceptor in the catalytic mechanism.

It belongs to the class I-like SAM-binding methyltransferase superfamily. Cation-independent O-methyltransferase family. COMT subfamily.

The enzyme catalyses (3,5-dichloro-2,4,6-trihydroxyphenyl)hexan-1-one + S-adenosyl-L-methionine = 1-(3,5-dichloro-2,6-dihydroxy-4-methoxyphenyl)hexan-1-one + S-adenosyl-L-homocysteine + H(+). The polypeptide is O-methyltransferase 7 (omt7) (Dictyostelium discoideum (Social amoeba)).